A 194-amino-acid polypeptide reads, in one-letter code: AP-3 complex subunit sigma (194 aa).

This sequence belongs to the adaptor complexes small subunit family. As to quaternary structure, adaptor protein complex 3 (AP-3) is a heterotetramer composed of 2 large adaptins (APL5 and APL6), a medium adaptin (APM3) and a small adaptin (APS3).

The protein resides in the golgi apparatus. It is found in the cytoplasmic vesicle membrane. Functionally, part of the AP-3 complex, an adaptor-related complex which is not clathrin-associated. The complex is associated with the Golgi region as well as more peripheral structures. It facilitates the budding of vesicles from the Golgi membrane and may be directly involved in trafficking to the vacuole. Required for the transport via the ALP pathway, which directs the transport of the cargo proteins PHO8 and VAM3 to the vacuole. This Saccharomyces cerevisiae (strain ATCC 204508 / S288c) (Baker's yeast) protein is AP-3 complex subunit sigma (APS3).